The chain runs to 127 residues: S1-like domain-containing protein C146.08c (127 aa).

One can recognise an S1-like domain in the interval 10 to 86; the sequence is SFDPPARLEK…NKIDGTILYV (77 aa). The tract at residues 107–127 is disordered; the sequence is ESLNQNDSEESSSSEEEYDSD. The segment covering 113–127 has biased composition (acidic residues); sequence DSEESSSSEEEYDSD. The residue at position 124 (Tyr124) is a Phosphotyrosine. Ser126 bears the Phosphoserine mark.

It belongs to the EIF1AD family.

Its subcellular location is the cytoplasm. It localises to the nucleus. In Schizosaccharomyces pombe (strain 972 / ATCC 24843) (Fission yeast), this protein is S1-like domain-containing protein C146.08c.